Consider the following 1043-residue polypeptide: V(D)J recombination-activating protein 1 (1043 aa).

The interval 1 to 288 is interaction with importin alpha-1; that stretch reads MAASFPPTLG…LAVDFPEHFV (288 aa). Basic and acidic residues predominate over residues 40-54; it reads KTPEEAQKEKKDSFE. The interval 40–80 is disordered; the sequence is KTPEEAQKEKKDSFEGKPSLEQSPAVLDKADGQKPVPTQPL. Lys-234 is covalently cross-linked (Glycyl lysine isopeptide (Lys-Gly) (interchain with G-Cter in ubiquitin)). The Zn(2+) site is built by Cys-269, His-273, Cys-293, Cys-296, His-298, Cys-308, His-310, Cys-313, Cys-316, Cys-328, Cys-331, Cys-358, Cys-363, His-375, and His-379. An RING-type zinc finger spans residues 293–332; that stretch reads CQICEHILADPVETNCKHVFCRVCILRCLKVMGSYCPSCR. The segment at 354-383 adopts an RAG1-type zinc-finger fold; sequence LMVKCPAKECNEEVSLEKYNHHISSHKESK. A DNA-binding region (NBD) is located at residues 392-459; sequence GGRPRQHLLS…QADELEAIMQ (68 aa). Residues Asp-603, Asp-711, and Glu-965 each contribute to the a divalent metal cation site.

Belongs to the RAG1 family. In terms of assembly, homodimer. Component of the RAG complex composed of core components RAG1 and RAG2, and associated component HMGB1 or HMGB2. Interacts with DCAF1, leading to recruitment of the CUL4A-RBX1-DDB1-DCAF1/VPRBP complex to ubiquitinate proteins and limit error-prone repair during V(D)J recombination. Requires Mg(2+) as cofactor. The cofactor is Mn(2+). In terms of processing, autoubiquitinated in the presence of CDC34/UBCH3. In terms of tissue distribution, maturing lymphoid cells.

The protein localises to the nucleus. It catalyses the reaction S-ubiquitinyl-[E2 ubiquitin-conjugating enzyme]-L-cysteine + [acceptor protein]-L-lysine = [E2 ubiquitin-conjugating enzyme]-L-cysteine + N(6)-ubiquitinyl-[acceptor protein]-L-lysine.. Catalytic component of the RAG complex, a multiprotein complex that mediates the DNA cleavage phase during V(D)J recombination. V(D)J recombination assembles a diverse repertoire of immunoglobulin and T-cell receptor genes in developing B and T-lymphocytes through rearrangement of different V (variable), in some cases D (diversity), and J (joining) gene segments. In the RAG complex, RAG1 mediates the DNA-binding to the conserved recombination signal sequences (RSS) and catalyzes the DNA cleavage activities by introducing a double-strand break between the RSS and the adjacent coding segment. RAG2 is not a catalytic component but is required for all known catalytic activities. DNA cleavage occurs in 2 steps: a first nick is introduced in the top strand immediately upstream of the heptamer, generating a 3'-hydroxyl group that can attack the phosphodiester bond on the opposite strand in a direct transesterification reaction, thereby creating 4 DNA ends: 2 hairpin coding ends and 2 blunt, 5'-phosphorylated ends. The chromatin structure plays an essential role in the V(D)J recombination reactions and the presence of histone H3 trimethylated at 'Lys-4' (H3K4me3) stimulates both the nicking and haipinning steps. The RAG complex also plays a role in pre-B cell allelic exclusion, a process leading to expression of a single immunoglobulin heavy chain allele to enforce clonality and monospecific recognition by the B-cell antigen receptor (BCR) expressed on individual B-lymphocytes. The introduction of DNA breaks by the RAG complex on one immunoglobulin allele induces ATM-dependent repositioning of the other allele to pericentromeric heterochromatin, preventing accessibility to the RAG complex and recombination of the second allele. In addition to its endonuclease activity, RAG1 also acts as an E3 ubiquitin-protein ligase that mediates monoubiquitination of histone H3. Histone H3 monoubiquitination is required for the joining step of V(D)J recombination. Mediates polyubiquitination of KPNA1. This Homo sapiens (Human) protein is V(D)J recombination-activating protein 1 (RAG1).